The sequence spans 484 residues: Ribosomal RNA small subunit methyltransferase F (484 aa).

S-adenosyl-L-methionine is bound by residues 126–132 (AAAPGSK), Glu150, Asp177, and Asp195. Cys248 functions as the Nucleophile in the catalytic mechanism.

Belongs to the class I-like SAM-binding methyltransferase superfamily. RsmB/NOP family.

It localises to the cytoplasm. It catalyses the reaction cytidine(1407) in 16S rRNA + S-adenosyl-L-methionine = 5-methylcytidine(1407) in 16S rRNA + S-adenosyl-L-homocysteine + H(+). Specifically methylates the cytosine at position 1407 (m5C1407) of 16S rRNA. This Pectobacterium atrosepticum (strain SCRI 1043 / ATCC BAA-672) (Erwinia carotovora subsp. atroseptica) protein is Ribosomal RNA small subunit methyltransferase F.